The following is a 355-amino-acid chain: MTNSSALSPSSSAVAPRPGALARWLWAVALLVIIVVGVGGITRLTESGLSITEWRPVSGVLPPLNEADWVREFEKYKQIPEYKEINLGMTLAGFKAIFFWEWLHRILGRVVGMALVVPFVWYAWRRAIPAGYGWRLFALTALVGLQGAIGWWMVASGLEYRTDVSHYRLAAHLLTALFLLAGLVWTARDLGALARDPGAPPARLTGAAIGVIAILFVQLLLGAWVAGLNAGYVSSSWPLMNDHFVPEGIDWSGGAWLALTNDPFLIHFLHRWWSWAAAGALLLLARTLARRGARAEACALVIVVAAQMLLGIWTIVSGVSMWVAVMHQVVGAILVAVTAAALHRLGRRSAITEVS.

The next 8 membrane-spanning stretches (helical) occupy residues 21–41 (LARWLWAVALLVIIVVGVGGI), 85–102 (INLGMTLAGFKAIFFWEW), 136–156 (LFALTALVGLQGAIGWWMVAS), 173–193 (LLTALFLLAGLVWTARDLGAL), 208–228 (AIGVIAILFVQLLLGAWVAGL), 264–284 (FLIHFLHRWWSWAAAGALLLL), 299–319 (ALVIVVAAQMLLGIWTIVSGV), and 322–342 (WVAVMHQVVGAILVAVTAAAL). H270 lines the heme pocket. H327 serves as a coordination point for heme.

Belongs to the COX15/CtaA family. Type 2 subfamily. As to quaternary structure, interacts with CtaB. It depends on heme b as a cofactor.

Its subcellular location is the cell membrane. The enzyme catalyses Fe(II)-heme o + 2 A + H2O = Fe(II)-heme a + 2 AH2. It participates in porphyrin-containing compound metabolism; heme A biosynthesis; heme A from heme O: step 1/1. Functionally, catalyzes the conversion of heme O to heme A by two successive hydroxylations of the methyl group at C8. The first hydroxylation forms heme I, the second hydroxylation results in an unstable dihydroxymethyl group, which spontaneously dehydrates, resulting in the formyl group of heme A. This Sphingopyxis alaskensis (strain DSM 13593 / LMG 18877 / RB2256) (Sphingomonas alaskensis) protein is Heme A synthase.